The sequence spans 122 residues: Proteasome assembly chaperone 3 (122 aa).

Position 1 is an N-acetylmethionine (Met-1).

This sequence belongs to the PSMG3 family. As to quaternary structure, homodimer. Interacts with PSMG4. Interacts directly with alpha and beta subunits of the 20S proteasome but dissociates before the formation of half-proteasomes, probably upon recruitment of POMP.

Chaperone protein which promotes assembly of the 20S proteasome. May cooperate with PSMG1-PSMG2 heterodimers to orchestrate the correct assembly of proteasomes. This Homo sapiens (Human) protein is Proteasome assembly chaperone 3.